A 121-amino-acid polypeptide reads, in one-letter code: Small ribosomal subunit protein uS13 (121 aa).

Positions 95–121 (LPMRGQRTRTNARTRKGPRKAAASLKK) are disordered.

It belongs to the universal ribosomal protein uS13 family. In terms of assembly, part of the 30S ribosomal subunit. Forms a loose heterodimer with protein S19. Forms two bridges to the 50S subunit in the 70S ribosome.

Located at the top of the head of the 30S subunit, it contacts several helices of the 16S rRNA. In the 70S ribosome it contacts the 23S rRNA (bridge B1a) and protein L5 of the 50S subunit (bridge B1b), connecting the 2 subunits; these bridges are implicated in subunit movement. Contacts the tRNAs in the A and P-sites. The polypeptide is Small ribosomal subunit protein uS13 (Polaromonas naphthalenivorans (strain CJ2)).